The following is a 429-amino-acid chain: UDP-N-acetylglucosamine 1-carboxyvinyltransferase (429 aa).

22 to 23 contacts phosphoenolpyruvate; sequence KN. UDP-N-acetyl-alpha-D-glucosamine is bound at residue arginine 102. Cysteine 126 (proton donor) is an active-site residue. Cysteine 126 carries the post-translational modification 2-(S-cysteinyl)pyruvic acid O-phosphothioketal. UDP-N-acetyl-alpha-D-glucosamine-binding positions include 131–135, aspartate 316, and isoleucine 338; that span reads RPVDL.

This sequence belongs to the EPSP synthase family. MurA subfamily.

It localises to the cytoplasm. It catalyses the reaction phosphoenolpyruvate + UDP-N-acetyl-alpha-D-glucosamine = UDP-N-acetyl-3-O-(1-carboxyvinyl)-alpha-D-glucosamine + phosphate. Its pathway is cell wall biogenesis; peptidoglycan biosynthesis. Functionally, cell wall formation. Adds enolpyruvyl to UDP-N-acetylglucosamine. In Rhodopseudomonas palustris (strain HaA2), this protein is UDP-N-acetylglucosamine 1-carboxyvinyltransferase.